Consider the following 548-residue polypeptide: Glucose-6-phosphate isomerase (548 aa).

Glu355 serves as the catalytic Proton donor. Catalysis depends on residues His386 and Lys514.

The protein belongs to the GPI family.

The protein localises to the cytoplasm. The enzyme catalyses alpha-D-glucose 6-phosphate = beta-D-fructose 6-phosphate. It functions in the pathway carbohydrate biosynthesis; gluconeogenesis. It participates in carbohydrate degradation; glycolysis; D-glyceraldehyde 3-phosphate and glycerone phosphate from D-glucose: step 2/4. Functionally, catalyzes the reversible isomerization of glucose-6-phosphate to fructose-6-phosphate. The polypeptide is Glucose-6-phosphate isomerase (Proteus mirabilis (strain HI4320)).